The primary structure comprises 214 residues: ATP phosphoribosyltransferase (214 aa).

Belongs to the ATP phosphoribosyltransferase family. Short subfamily. As to quaternary structure, heteromultimer composed of HisG and HisZ subunits.

It is found in the cytoplasm. The enzyme catalyses 1-(5-phospho-beta-D-ribosyl)-ATP + diphosphate = 5-phospho-alpha-D-ribose 1-diphosphate + ATP. It participates in amino-acid biosynthesis; L-histidine biosynthesis; L-histidine from 5-phospho-alpha-D-ribose 1-diphosphate: step 1/9. In terms of biological role, catalyzes the condensation of ATP and 5-phosphoribose 1-diphosphate to form N'-(5'-phosphoribosyl)-ATP (PR-ATP). Has a crucial role in the pathway because the rate of histidine biosynthesis seems to be controlled primarily by regulation of HisG enzymatic activity. This chain is ATP phosphoribosyltransferase, found in Marinomonas sp. (strain MWYL1).